The sequence spans 906 residues: Catenin alpha-1 (906 aa).

Thr2 carries the post-translational modification N-acetylthreonine. Positions Thr2–Cys228 are involved in homodimerization. Residue Lys57 forms a Glycyl lysine isopeptide (Lys-Gly) (interchain with G-Cter in SUMO2) linkage. The tract at residues Val97–Tyr148 is interaction with JUP and CTNNB1. Residues Ser264, Ser268, Ser295, and Ser297 each carry the phosphoserine modification. The interaction with alpha-actinin stretch occupies residues Thr325 to Phe394. The residue at position 634 (Thr634) is a Phosphothreonine. At Ser641 the chain carries Phosphoserine; by CK2. Phosphothreonine is present on Thr645. Phosphoserine; by CK1 is present on residues Ser652 and Ser655. At Thr658 the chain carries Phosphothreonine; by CK1. Lys797 is covalently cross-linked (Glycyl lysine isopeptide (Lys-Gly) (interchain with G-Cter in SUMO2)). Residue Ser851 is modified to Phosphoserine. A compositionally biased stretch (basic and acidic residues) spans Pro864–Thr880. The interval Pro864 to Val894 is disordered. Residues Lys881–Val891 show a composition bias toward basic residues.

Belongs to the vinculin/alpha-catenin family. As to quaternary structure, monomer and homodimer; the monomer preferentially binds to CTNNB1 and the homodimer to actin. Component of an cadherin:catenin adhesion complex composed of at least of CDH26, beta-catenin/CTNNB1, alpha-catenin/CTNNA1 and p120 catenin/CTNND1. Possible component of an E-cadherin/ catenin adhesion complex together with E-cadherin/CDH1 and beta-catenin/CTNNB1 or gamma-catenin/JUP; the complex is located to adherens junctions. The stable association of CTNNA1 is controversial as CTNNA1 was shown not to bind to F-actin when assembled in the complex. Alternatively, the CTNNA1-containing complex may be linked to F-actin by other proteins such as LIMA1. Binds AFDN and F-actin. Interacts with ARHGAP21. Interacts with AJUBA. Interacts with LIMA1. Interacts with vinculin/VCL. Interacts with TJP2/ZO2 (via N-terminus). Interacts with TJP1/ZO1 (via N-terminus). Post-translationally, sumoylated. In terms of processing, phosphorylation seems to contribute to the strength of cell-cell adhesion rather than to the basic capacity for cell-cell adhesion. In terms of tissue distribution, ubiquitously expressed in normal tissues. As to expression, abundantly expressed in brain and cerebellum, also expressed in the placenta, liver, lung, colon, heart, pancreas, stomach and thymus.

The protein localises to the cytoplasm. It is found in the cytoskeleton. The protein resides in the cell junction. Its subcellular location is the adherens junction. It localises to the cell membrane. The protein localises to the nucleus. In terms of biological role, associates with the cytoplasmic domain of a variety of cadherins. The association of catenins to cadherins produces a complex which is linked to the actin filament network, and which seems to be of primary importance for cadherins cell-adhesion properties. Can associate with both E- and N-cadherins. Originally believed to be a stable component of E-cadherin/catenin adhesion complexes and to mediate the linkage of cadherins to the actin cytoskeleton at adherens junctions. In contrast, cortical actin was found to be much more dynamic than E-cadherin/catenin complexes and CTNNA1 was shown not to bind to F-actin when assembled in the complex suggesting a different linkage between actin and adherens junctions components. The homodimeric form may regulate actin filament assembly and inhibit actin branching by competing with the Arp2/3 complex for binding to actin filaments. Involved in the regulation of WWTR1/TAZ, YAP1 and TGFB1-dependent SMAD2 and SMAD3 nuclear accumulation. May play a crucial role in cell differentiation. The chain is Catenin alpha-1 from Homo sapiens (Human).